The sequence spans 475 residues: Bifunctional protein HldE (475 aa).

Residues M1–A317 are ribokinase. An ATP-binding site is contributed by N194–E197. D263 is a catalytic residue. The tract at residues M343 to E475 is cytidylyltransferase.

It in the N-terminal section; belongs to the carbohydrate kinase PfkB family. The protein in the C-terminal section; belongs to the cytidylyltransferase family. As to quaternary structure, homodimer.

The catalysed reaction is D-glycero-beta-D-manno-heptose 7-phosphate + ATP = D-glycero-beta-D-manno-heptose 1,7-bisphosphate + ADP + H(+). The enzyme catalyses D-glycero-beta-D-manno-heptose 1-phosphate + ATP + H(+) = ADP-D-glycero-beta-D-manno-heptose + diphosphate. It functions in the pathway nucleotide-sugar biosynthesis; ADP-L-glycero-beta-D-manno-heptose biosynthesis; ADP-L-glycero-beta-D-manno-heptose from D-glycero-beta-D-manno-heptose 7-phosphate: step 1/4. The protein operates within nucleotide-sugar biosynthesis; ADP-L-glycero-beta-D-manno-heptose biosynthesis; ADP-L-glycero-beta-D-manno-heptose from D-glycero-beta-D-manno-heptose 7-phosphate: step 3/4. In terms of biological role, catalyzes the phosphorylation of D-glycero-D-manno-heptose 7-phosphate at the C-1 position to selectively form D-glycero-beta-D-manno-heptose-1,7-bisphosphate. Functionally, catalyzes the ADP transfer from ATP to D-glycero-beta-D-manno-heptose 1-phosphate, yielding ADP-D-glycero-beta-D-manno-heptose. The sequence is that of Bifunctional protein HldE from Histophilus somni (strain 129Pt) (Haemophilus somnus).